A 348-amino-acid polypeptide reads, in one-letter code: GTPase Obg (348 aa).

In terms of domain architecture, Obg spans 1 to 159; the sequence is MKFVDEVKVH…RELVLELKLM (159 aa). In terms of domain architecture, OBG-type G spans 160–331; that stretch reads ADVGLVGLPN…LLSALVRILS (172 aa). GTP-binding positions include 166-173, 191-195, 213-216, 283-286, and 312-314; these read GLPNAGKS, FTTLI, DIPG, NKVD, and SAR. Residues Ser173 and Thr193 each contribute to the Mg(2+) site.

This sequence belongs to the TRAFAC class OBG-HflX-like GTPase superfamily. OBG GTPase family. As to quaternary structure, monomer. Mg(2+) serves as cofactor.

Its subcellular location is the cytoplasm. An essential GTPase which binds GTP, GDP and possibly (p)ppGpp with moderate affinity, with high nucleotide exchange rates and a fairly low GTP hydrolysis rate. Plays a role in control of the cell cycle, stress response, ribosome biogenesis and in those bacteria that undergo differentiation, in morphogenesis control. This is GTPase Obg from Syntrophobacter fumaroxidans (strain DSM 10017 / MPOB).